The chain runs to 299 residues: CDP-abequose synthase (299 aa).

A substrate-binding site is contributed by T117. Catalysis depends on Y134, which acts as the Proton acceptor.

This sequence belongs to the NAD(P)-dependent epimerase/dehydratase family.

It carries out the reaction CDP-alpha-D-abequose + NADP(+) = CDP-4-dehydro-3,6-dideoxy-alpha-D-glucose + NADPH + H(+). Its pathway is bacterial outer membrane biogenesis; LPS O-antigen biosynthesis. This Salmonella typhimurium (strain LT2 / SGSC1412 / ATCC 700720) protein is CDP-abequose synthase (rfbJ).